The following is a 455-amino-acid chain: tRNA-2-methylthio-N(6)-dimethylallyladenosine synthase (455 aa).

The region spanning 3-117 (KGLYIESYGC…LPELIMKATR (115 aa)) is the MTTase N-terminal domain. Positions 12, 48, 80, 155, 159, and 162 each coordinate [4Fe-4S] cluster. The Radical SAM core domain occupies 141 to 375 (VSRGVSAFVS…LLTQQRLFTK (235 aa)).

The protein belongs to the methylthiotransferase family. MiaB subfamily. Monomer. [4Fe-4S] cluster serves as cofactor.

The protein resides in the cytoplasm. The catalysed reaction is N(6)-dimethylallyladenosine(37) in tRNA + (sulfur carrier)-SH + AH2 + 2 S-adenosyl-L-methionine = 2-methylsulfanyl-N(6)-dimethylallyladenosine(37) in tRNA + (sulfur carrier)-H + 5'-deoxyadenosine + L-methionine + A + S-adenosyl-L-homocysteine + 2 H(+). Catalyzes the methylthiolation of N6-(dimethylallyl)adenosine (i(6)A), leading to the formation of 2-methylthio-N6-(dimethylallyl)adenosine (ms(2)i(6)A) at position 37 in tRNAs that read codons beginning with uridine. This Anaplasma marginale (strain St. Maries) protein is tRNA-2-methylthio-N(6)-dimethylallyladenosine synthase.